The primary structure comprises 378 residues: Chaperone protein DnaJ (378 aa).

In terms of domain architecture, J spans D5–G70. A CR-type zinc finger spans residues G134–T212. 8 residues coordinate Zn(2+): C147, C150, C164, C167, C186, C189, C200, and C203. CXXCXGXG motif repeat units lie at residues C147–G154, C164–G171, C186–G193, and C200–G207.

It belongs to the DnaJ family. Homodimer. Requires Zn(2+) as cofactor.

The protein resides in the cytoplasm. Its function is as follows. Participates actively in the response to hyperosmotic and heat shock by preventing the aggregation of stress-denatured proteins and by disaggregating proteins, also in an autonomous, DnaK-independent fashion. Unfolded proteins bind initially to DnaJ; upon interaction with the DnaJ-bound protein, DnaK hydrolyzes its bound ATP, resulting in the formation of a stable complex. GrpE releases ADP from DnaK; ATP binding to DnaK triggers the release of the substrate protein, thus completing the reaction cycle. Several rounds of ATP-dependent interactions between DnaJ, DnaK and GrpE are required for fully efficient folding. Also involved, together with DnaK and GrpE, in the DNA replication of plasmids through activation of initiation proteins. This is Chaperone protein DnaJ from Shewanella oneidensis (strain ATCC 700550 / JCM 31522 / CIP 106686 / LMG 19005 / NCIMB 14063 / MR-1).